Consider the following 62-residue polypeptide: DNA gyrase inhibitor YacG (62 aa).

Positions 8, 11, 27, and 31 each coordinate Zn(2+).

It belongs to the DNA gyrase inhibitor YacG family. Interacts with GyrB. Zn(2+) is required as a cofactor.

Functionally, inhibits all the catalytic activities of DNA gyrase by preventing its interaction with DNA. Acts by binding directly to the C-terminal domain of GyrB, which probably disrupts DNA binding by the gyrase. This is DNA gyrase inhibitor YacG from Actinobacillus pleuropneumoniae serotype 5b (strain L20).